The following is a 96-amino-acid chain: (4S)-4-hydroxy-5-phosphonooxypentane-2,3-dione isomerase (96 aa).

One can recognise an ABM domain in the interval 2–91; it reads HVTLVEINVK…MTGPRKKTTF (90 aa).

Belongs to the LsrG family. As to quaternary structure, homodimer.

Its subcellular location is the cytoplasm. It carries out the reaction (2S)-2-hydroxy-3,4-dioxopentyl phosphate = 3-hydroxy-2,4-dioxopentyl phosphate. Involved in the degradation of phospho-AI-2, thereby terminating induction of the lsr operon and closing the AI-2 signaling cycle. Catalyzes the conversion of (4S)-4-hydroxy-5-phosphonooxypentane-2,3-dione (P-DPD) to 3-hydroxy-5-phosphonooxypentane-2,4-dione (P-HPD). This Yersinia enterocolitica serotype O:8 / biotype 1B (strain NCTC 13174 / 8081) protein is (4S)-4-hydroxy-5-phosphonooxypentane-2,3-dione isomerase.